A 335-amino-acid polypeptide reads, in one-letter code: ATP-dependent 6-phosphofructokinase (335 aa).

Gly-11 contributes to the ATP binding site. 21 to 25 (RAVVR) contributes to the ADP binding site. ATP contacts are provided by residues 72 to 73 (RY) and 102 to 105 (GDGS). Asp-103 lines the Mg(2+) pocket. A substrate-binding site is contributed by 125–127 (TID). Asp-127 functions as the Proton acceptor in the catalytic mechanism. ADP is bound at residue Arg-154. Substrate contacts are provided by residues Arg-162 and 169-171 (MGR). ADP is bound by residues 185 to 187 (GAD) and 213 to 215 (KKH). Substrate is bound by residues Glu-222, Arg-244, and 250–253 (HIQR).

The protein belongs to the phosphofructokinase type A (PFKA) family. ATP-dependent PFK group I subfamily. Prokaryotic clade 'B1' sub-subfamily. Homotetramer. The cofactor is Mg(2+).

It is found in the cytoplasm. The catalysed reaction is beta-D-fructose 6-phosphate + ATP = beta-D-fructose 1,6-bisphosphate + ADP + H(+). It functions in the pathway carbohydrate degradation; glycolysis; D-glyceraldehyde 3-phosphate and glycerone phosphate from D-glucose: step 3/4. Its activity is regulated as follows. Allosterically activated by ADP and other diphosphonucleosides, and allosterically inhibited by phosphoenolpyruvate. Catalyzes the phosphorylation of D-fructose 6-phosphate to fructose 1,6-bisphosphate by ATP, the first committing step of glycolysis. The sequence is that of ATP-dependent 6-phosphofructokinase from Streptococcus pneumoniae (strain ATCC BAA-255 / R6).